The primary structure comprises 367 residues: Germination protease (367 aa).

Positions 1 to 15 are excised as a propeptide; sequence MKEPLDLSKYSIRTD.

Belongs to the peptidase A25 family. As to quaternary structure, homotetramer. Post-translationally, autoproteolytically processed. The inactive tetrameric zymogen termed p46 autoprocesses to a smaller form termed p41, which is active only during spore germination.

The catalysed reaction is Endopeptidase action with P4 Glu or Asp, P1 preferably Glu &gt; Asp, P1' hydrophobic and P2' Ala.. Initiates the rapid degradation of small, acid-soluble proteins during spore germination. The protein is Germination protease of Bacillus cereus (strain B4264).